The primary structure comprises 585 residues: Proline-rich protein 14 (585 aa).

Residue Met1 is modified to N-acetylmethionine. The interval 1–135 is sufficient for heterochromatin association in interphase and chromatin association in anaphase; the sequence is MDLPGDSSPP…TLRRRSRTTP (135 aa). Disordered regions lie at residues 23 to 46, 73 to 150, and 189 to 241; these read ALWG…PLEK, TSIP…RAPQ, and IVRQ…RPRL. Residues 85-378 are required for the interaction with GRB2 and sufficient to promote the phosphorylation of AKT and cell proliferation; sequence PVHRQPPASP…MARAPPPPRP (294 aa). Over residues 119-132 the composition is skewed to basic residues; the sequence is RIHRTSSTLRRRSR. The interval 136–365 is required for nuclear lamina association; sequence GPEEGPSQKV…RPRPRRHTVG (230 aa). The span at 193–205 shows a compositional bias: pro residues; sequence PTPPPGDLEPPFQ. Ser277 is subject to Phosphoserine. Disordered stretches follow at residues 290-445 and 525-557; these read EAEQ…KVSR and DSSL…PDVG. Pro residues predominate over residues 337-356; the sequence is LGPPGPGTCTWPPAPPQPSR. The segment covering 393 to 409 has biased composition (low complexity); that stretch reads SPSLTTSCSSTASTSFS. The interval 518 to 535 is required for nuclear localization; that stretch reads RRAVEFRDSSLPRSRRPS.

As to quaternary structure, interacts (via proline-rich region) with GRB2 (via SH3 domain 2). Interacts (via N-terminus) with CBX5.

The protein localises to the chromosome. It localises to the nucleus. It is found in the nucleus lamina. Its subcellular location is the nucleoplasm. In terms of biological role, functions in tethering peripheral heterochromatin to the nuclear lamina during interphase, possibly through the interaction with heterochromatin protein CBX5/HP1 alpha. Might play a role in reattaching heterochromatin to the nuclear lamina at mitotic exit. Promotes myoblast differentiation during skeletal myogenesis, possibly by stimulating transcription factor MyoD activity via binding to CBX5/HP1 alpha. Involved in the positive regulation of the PI3K-Akt-mTOR signaling pathway and in promoting cell proliferation, possibly via binding to GRB2. This Homo sapiens (Human) protein is Proline-rich protein 14 (PRR14).